We begin with the raw amino-acid sequence, 206 residues long: Small ribosomal subunit protein uS4B (206 aa).

The region spanning glycine 96–glycine 156 is the S4 RNA-binding domain.

Belongs to the universal ribosomal protein uS4 family. Part of the 30S ribosomal subunit. Contacts protein S5. The interaction surface between S4 and S5 is involved in control of translational fidelity.

Functionally, one of the primary rRNA binding proteins, it binds directly to 16S rRNA where it nucleates assembly of the body of the 30S subunit. Its function is as follows. With S5 and S12 plays an important role in translational accuracy. The protein is Small ribosomal subunit protein uS4B of Psychromonas ingrahamii (strain DSM 17664 / CCUG 51855 / 37).